The primary structure comprises 878 residues: Probable LRR receptor-like serine/threonine-protein kinase MEE39 (878 aa).

The N-terminal stretch at M1–G25 is a signal peptide. The Extracellular segment spans residues Q26 to V514. Residues N183, N203, N235, N290, N404, N418, N445, and N466 are each glycosylated (N-linked (GlcNAc...) asparagine). LRR repeat units follow at residues R413–A436, H437–T458, and S461–R483. A helical membrane pass occupies residues K515–F535. Residues K536–R878 are Cytoplasmic-facing. Position 557 is a phosphothreonine (T557). In terms of domain architecture, Protein kinase spans K566 to L840. ATP-binding positions include L572 to V580 and K594. Y639 carries the phosphotyrosine modification. D691 serves as the catalytic Proton acceptor. Position 726 is a phosphoserine (S726). T727 and T732 each carry phosphothreonine. A Phosphotyrosine modification is found at Y740. Over residues R849 to F869 the composition is skewed to polar residues. The segment at R849–R878 is disordered.

It belongs to the protein kinase superfamily. Ser/Thr protein kinase family.

The protein resides in the membrane. The enzyme catalyses L-seryl-[protein] + ATP = O-phospho-L-seryl-[protein] + ADP + H(+). It catalyses the reaction L-threonyl-[protein] + ATP = O-phospho-L-threonyl-[protein] + ADP + H(+). Receptor-like serine/threonine-kinase required during the endosperm development in seeds. The protein is Probable LRR receptor-like serine/threonine-protein kinase MEE39 (MEE39) of Arabidopsis thaliana (Mouse-ear cress).